The primary structure comprises 78 residues: Small ribosomal subunit protein bS18 (78 aa).

This sequence belongs to the bacterial ribosomal protein bS18 family. As to quaternary structure, part of the 30S ribosomal subunit. Forms a tight heterodimer with protein bS6.

In terms of biological role, binds as a heterodimer with protein bS6 to the central domain of the 16S rRNA, where it helps stabilize the platform of the 30S subunit. In Lactobacillus delbrueckii subsp. bulgaricus (strain ATCC BAA-365 / Lb-18), this protein is Small ribosomal subunit protein bS18.